An 893-amino-acid chain; its full sequence is POU domain protein 2, isoform B (893 aa).

A disordered region spans residues Gln-586 to Thr-668. Positions Pro-602–Pro-617 are enriched in low complexity. Polar residues predominate over residues Gln-623–Asn-646. Residues Thr-647–Ser-665 are compositionally biased toward low complexity. Residues Glu-681–Asp-755 form the POU-specific domain. A DNA-binding region (homeobox) is located at residues Arg-786 to Asn-845.

This sequence belongs to the POU transcription factor family. Class-2 subfamily. In terms of tissue distribution, initial expression in cellular blastoderm stage, then in ectodermal stripes during germband extension. Broad expression in the neuroectoderm followed by limitation to discrete subsets of CNS cells, and expression in specific PNS neurons and support cells.

The protein localises to the nucleus. Functionally, DNA-binding regulatory protein implicated in early development. Involved in neuronal cell fate decision. May act as an octamer-dependent activator of transcription. Could also play an early role in specific ectodermal cells, and a subsequent role in the embryonic nervous system. In Drosophila melanogaster (Fruit fly), this protein is POU domain protein 2, isoform B.